Here is a 94-residue protein sequence, read N- to C-terminus: uncharacterized protein (94 aa).

The disordered stretch occupies residues 1-23 (MVLLAGTRPQGGEARCMIPPPPS).

This is an uncharacterized protein from Homo sapiens (Human).